Reading from the N-terminus, the 1146-residue chain is Sodium/hydrogen exchanger 7 (1146 aa).

The Extracellular segment spans residues 1 to 28; sequence MTTVIDATMAYRFLEEATDSSSSSSSSK. Residues 29–49 traverse the membrane as a helical segment; the sequence is LESSPVDAVLFVGMSLVLGIA. The Cytoplasmic portion of the chain corresponds to 50–58; it reads SRHLLRGTR. The helical transmembrane segment at 59 to 79 threads the bilayer; that stretch reads VPYTVALLVIGIALGSLEYGA. The Extracellular portion of the chain corresponds to 80–99; that stretch reads KHNLGKIGHGIRIWNEIDPE. Residues 100 to 120 traverse the membrane as a helical segment; that stretch reads LLLAVFLPALLFESSFSMEVH. Residues 121-127 are Cytoplasmic-facing; the sequence is QIKRCLG. Residues 128-148 traverse the membrane as a helical segment; sequence QMVLLAVPGVLISTACLGSLV. At 149-159 the chain is on the extracellular side; the sequence is KVTFPYEWDWK. The chain crosses the membrane as a helical span at residues 160–180; that stretch reads TSLLLGGLLSATDPVAVVALL. Residues 181–191 are Cytoplasmic-facing; sequence KELGASKKLST. A helical transmembrane segment spans residues 192–212; the sequence is IIEGESLMNDGTAIVVFQLFL. Residues 213 to 227 lie on the Extracellular side of the membrane; that stretch reads KMAMGQNSDWSSIIK. A helical membrane pass occupies residues 228–250; sequence FLLKVALGAVGIGLAFGIASVIW. At 251–253 the chain is on the cytoplasmic side; that stretch reads LKF. The chain crosses the membrane as a helical span at residues 254 to 273; the sequence is IFNDTVIEITLTIAVSYFAY. Topologically, residues 274 to 278 are extracellular; it reads YTAQE. The helical transmembrane segment at 279-299 threads the bilayer; that stretch reads WAGASGVLTVMTLGMFYAAFA. The Cytoplasmic segment spans residues 300–313; that stretch reads RTAFKGDSQKSLHH. The chain crosses the membrane as a helical span at residues 314–334; the sequence is FWEMVAYIANTLIFILSGVVI. Topologically, residues 335 to 352 are extracellular; it reads AEGILDSDKIAYQGNSWR. The helical transmembrane segment at 353–373 threads the bilayer; that stretch reads FLFLLYVYIQLSRVVVVGVLY. The Cytoplasmic portion of the chain corresponds to 374-387; that stretch reads PLLCRFGYGLDWKE. The helical transmembrane segment at 388–408 threads the bilayer; the sequence is SIILVWSGLRGAVALALSLSV. Residues 409–420 lie on the Extracellular side of the membrane; it reads KQSSGNSHISKE. The chain crosses the membrane as a helical span at residues 421 to 441; sequence TGTLFLFFTGGIVFLTLIVNG. Residues 442 to 1146 lie on the Cytoplasmic side of the membrane; that stretch reads STTQFVLRLL…PSKIVFRNDL (705 aa). Disordered stretches follow at residues 981–1001 and 1102–1128; these read LHRR…QLQR and CQLP…DEDE. Over residues 986–996 the composition is skewed to low complexity; sequence SSLTPPRSSSS. The segment covering 1109 to 1118 has biased composition (polar residues); the sequence is ESSTRQNTMV.

This sequence belongs to the monovalent cation:proton antiporter 1 (CPA1) transporter (TC 2.A.36) family. In terms of assembly, interacts with CIPK24/SOS2 and CBL4/SOS3. Phosphorylated by CIPK24/SOS2 in complex with CBL4/SOS3. More expressed in roots than in shoots. Mostly localized in parenchyma cells at the xylem/symplast boundary in roots, hypocotyls, stems and leaves. Also present in root tips epidermal cells.

It is found in the cell membrane. The enzyme catalyses Na(+)(in) + H(+)(out) = Na(+)(out) + H(+)(in). It catalyses the reaction K(+)(in) + H(+)(out) = K(+)(out) + H(+)(in). In terms of biological role, acts in electroneutral exchange of protons for cations such as Na(+) or Li(+) across plasma membrane. Involved in Na(+) and K(+) homeostasis. Required for cytoplasmic Na(+) and Li(+) detoxification by secreting them from the cytoplasm to the extracellular space. Regulates Na(+) content of the xylem sap. This Arabidopsis thaliana (Mouse-ear cress) protein is Sodium/hydrogen exchanger 7 (NHX7).